Consider the following 1244-residue polypeptide: Superkiller complex protein 2 (1244 aa).

Positions Leu218–Val249 are disordered. Phosphoserine occurs at positions 242 and 253. A Helicase ATP-binding domain is found at Ile316–Ile472. Ala329–Thr336 lines the ATP pocket. Positions Asp420–His423 match the DEVH box motif. The region spanning Gly582–Leu752 is the Helicase C-terminal domain.

Belongs to the helicase family. SKI2 subfamily. In terms of assembly, component of the SKI complex which consists of SKIC2, SKIC3 and SKIC8. Interacts with HBS1L isoform 2.

The protein localises to the nucleus. The protein resides in the cytoplasm. The enzyme catalyses ATP + H2O = ADP + phosphate + H(+). Helicase component of the SKI complex, a multiprotein complex that assists the RNA-degrading exosome during the mRNA decay and quality-control pathways. The SKI complex catalyzes mRNA extraction from 80S ribosomal complexes in the 3'-5' direction and channels mRNA to the cytosolic exosome for degradation. SKI-mediated extraction of mRNA from stalled ribosomes allow binding of the Pelota-HBS1L complex and subsequent ribosome disassembly by ABCE1 for ribosome recycling. In the nucleus, the SKI complex associates with transcriptionally active genes in a manner dependent on PAF1 complex (PAF1C). The chain is Superkiller complex protein 2 from Mus musculus (Mouse).